Reading from the N-terminus, the 497-residue chain is Cobyric acid synthase (497 aa).

Residues 250–445 (EVTIAVIRLP…LHGIFNNGPW (196 aa)) enclose the GATase cobBQ-type domain. Cysteine 331 serves as the catalytic Nucleophile. The active site involves histidine 437.

Belongs to the CobB/CobQ family. CobQ subfamily.

Its pathway is cofactor biosynthesis; adenosylcobalamin biosynthesis. In terms of biological role, catalyzes amidations at positions B, D, E, and G on adenosylcobyrinic A,C-diamide. NH(2) groups are provided by glutamine, and one molecule of ATP is hydrogenolyzed for each amidation. This Acaryochloris marina (strain MBIC 11017) protein is Cobyric acid synthase.